Reading from the N-terminus, the 276-residue chain is MSNSRQHQGHFARKRFGQNFLVDHGVIDSIVTTIGPARGQRMVEIGPGLGALTEPLIARLATPESPLHAVELDRDLIGRLQQRFGPLLELHAGDALAFDFRSLAAPGDKPSLRIVGNLPYNISSPLLFHLMTFADAVIDQHFMLQNEVVERMVAEPGTKAFSRLSVMLQYRYVMEKMLDVPPESFQPPPKVDSAIVRMIPYEPHELPDVDPVLLGELVTAAFSQRRKMLRNTLGDYRETIDFDGLGFDLARRAEDVSVAEYVGVAQALAARRKAAE.

Residues asparagine 19, leucine 21, glycine 46, glutamate 71, aspartate 94, and asparagine 117 each contribute to the S-adenosyl-L-methionine site.

This sequence belongs to the class I-like SAM-binding methyltransferase superfamily. rRNA adenine N(6)-methyltransferase family. RsmA subfamily.

The protein localises to the cytoplasm. It carries out the reaction adenosine(1518)/adenosine(1519) in 16S rRNA + 4 S-adenosyl-L-methionine = N(6)-dimethyladenosine(1518)/N(6)-dimethyladenosine(1519) in 16S rRNA + 4 S-adenosyl-L-homocysteine + 4 H(+). Specifically dimethylates two adjacent adenosines (A1518 and A1519) in the loop of a conserved hairpin near the 3'-end of 16S rRNA in the 30S particle. May play a critical role in biogenesis of 30S subunits. The protein is Ribosomal RNA small subunit methyltransferase A of Burkholderia ambifaria (strain ATCC BAA-244 / DSM 16087 / CCUG 44356 / LMG 19182 / AMMD) (Burkholderia cepacia (strain AMMD)).